We begin with the raw amino-acid sequence, 144 residues long: Peptidyl-Asp metalloendopeptidase (144 aa).

His-64 contacts Zn(2+). The active site involves Glu-65. His-68 serves as a coordination point for Zn(2+).

Belongs to the peptidase M72 family. It depends on Zn(2+) as a cofactor.

The enzyme catalyses Cleavage of Xaa-|-Asp, Xaa-|-Glu and Xaa-|-cysteic acid bonds.. Metalloprotease, specifically cleaves on the N-terminal side of aspartyl, glutamyl and cysteic acid residues. This chain is Peptidyl-Asp metalloendopeptidase, found in Pseudomonas fragi.